The following is a 388-amino-acid chain: Succinate--CoA ligase [ADP-forming] subunit beta (388 aa).

The ATP-grasp domain occupies 9–244 (KQLFARYGLP…QSQEDPREAQ (236 aa)). ATP contacts are provided by residues K46, 53–55 (GRG), E99, T102, and E107. Mg(2+) contacts are provided by N199 and D213. Substrate-binding positions include N264 and 321–323 (GIV).

The protein belongs to the succinate/malate CoA ligase beta subunit family. Heterotetramer of two alpha and two beta subunits. Requires Mg(2+) as cofactor.

The enzyme catalyses succinate + ATP + CoA = succinyl-CoA + ADP + phosphate. It carries out the reaction GTP + succinate + CoA = succinyl-CoA + GDP + phosphate. It functions in the pathway carbohydrate metabolism; tricarboxylic acid cycle; succinate from succinyl-CoA (ligase route): step 1/1. Succinyl-CoA synthetase functions in the citric acid cycle (TCA), coupling the hydrolysis of succinyl-CoA to the synthesis of either ATP or GTP and thus represents the only step of substrate-level phosphorylation in the TCA. The beta subunit provides nucleotide specificity of the enzyme and binds the substrate succinate, while the binding sites for coenzyme A and phosphate are found in the alpha subunit. The polypeptide is Succinate--CoA ligase [ADP-forming] subunit beta (Salmonella choleraesuis (strain SC-B67)).